Here is a 134-residue protein sequence, read N- to C-terminus: Large ribosomal subunit protein uL18 (134 aa).

It belongs to the universal ribosomal protein uL18 family. Part of the 50S ribosomal subunit; part of the 5S rRNA/L5/L18/L25 subcomplex. Contacts the 5S and 23S rRNAs.

Its function is as follows. This is one of the proteins that bind and probably mediate the attachment of the 5S RNA into the large ribosomal subunit, where it forms part of the central protuberance. The chain is Large ribosomal subunit protein uL18 from Corynebacterium glutamicum (strain ATCC 13032 / DSM 20300 / JCM 1318 / BCRC 11384 / CCUG 27702 / LMG 3730 / NBRC 12168 / NCIMB 10025 / NRRL B-2784 / 534).